Consider the following 671-residue polypeptide: Putative protein kinase C delta type homolog (671 aa).

Positions 1–136 (MMFTRAQVRK…ITNRRGAIKH (136 aa)) are disordered. The span at 14 to 27 (SNSSSQRPRSSGGS) shows a compositional bias: low complexity. Positions 57-101 (ARRDQYRDRDHYGKHSFELPRQHSKEEAYHRDRESSAGGVDRGER) are enriched in basic and acidic residues. A compositionally biased stretch (gly residues) spans 102-116 (SGIGGNGGGVTGGGV). Phorbol-ester/DAG-type zinc fingers lie at residues 144–194 (GHRF…LGKC) and 216–266 (PHRF…ANLC). Residues 343–601 (FHFLAVLGKG…AGDIADHIFF (259 aa)) enclose the Protein kinase domain. Residues 349-357 (LGKGSFGKV) and Lys-372 contribute to the ATP site. The Proton acceptor role is filled by Asp-467. The AGC-kinase C-terminal domain maps to 602 to 671 (RPIDWGLLEK…TYTNPHITLD (70 aa)).

This sequence belongs to the protein kinase superfamily. AGC Ser/Thr protein kinase family. PKC subfamily.

It catalyses the reaction L-seryl-[protein] + ATP = O-phospho-L-seryl-[protein] + ADP + H(+). The enzyme catalyses L-threonyl-[protein] + ATP = O-phospho-L-threonyl-[protein] + ADP + H(+). This chain is Putative protein kinase C delta type homolog, found in Drosophila melanogaster (Fruit fly).